The primary structure comprises 111 residues: Ribonuclease P protein component (111 aa).

Belongs to the RnpA family. In terms of assembly, consists of a catalytic RNA component (M1 or rnpB) and a protein subunit.

It catalyses the reaction Endonucleolytic cleavage of RNA, removing 5'-extranucleotides from tRNA precursor.. RNaseP catalyzes the removal of the 5'-leader sequence from pre-tRNA to produce the mature 5'-terminus. It can also cleave other RNA substrates such as 4.5S RNA. The protein component plays an auxiliary but essential role in vivo by binding to the 5'-leader sequence and broadening the substrate specificity of the ribozyme. The chain is Ribonuclease P protein component from Fusobacterium nucleatum subsp. nucleatum (strain ATCC 25586 / DSM 15643 / BCRC 10681 / CIP 101130 / JCM 8532 / KCTC 2640 / LMG 13131 / VPI 4355).